We begin with the raw amino-acid sequence, 529 residues long: MISCKNLCVLRQLPLKNCRRHYSAIQSSAALLSVRPTKWTPKPAAAGGAVSAWQQRTTAKQHQQQQRRSLFSSSRMQAKDYYATLGVAKNANAKDIKKAYYELAKKYHPDTNKDDPDASKKFQDVSEAYEVLSDDQKRREYDTYGQTTENMNRQGAGGAGGFGGGPFGPDGFSQNWQFRSTIDPEELFRKIFGEGNFRSNSFDDFADSKFGFGQAQELVMDLTFAQAARGVNKDVNVNVVDQCPKCAGSKCEPGTKPGRCQYCNGTGFETISTGPFVMRSTCRYCQGTRQYIKYPCAECEGKGQTVQRRKVTVPVPAGIENGQTVRMQVGSKELFVTFRVERSDYFRRDGADVHTDAPISLAQAVLGGTVRVQGVYEDQWLNIEPGTSSHRKIALRGKGLKRVNAHGHGDHYVHIKIEVPKKLSQEQRALLEAYAELEEDTPGQIHGMAQRKDGSKKATAGASETKTDAQPAGRTADSGSQGTSRAGAETESAKGQQSEKSETRRKDQQTGGESGSGGGFLNKIKSMFN.

The transit peptide at 1–22 directs the protein to the mitochondrion; sequence MISCKNLCVLRQLPLKNCRRHY. An Omega-N-methylarginine modification is found at Arg35. The region spanning 80–145 is the J domain; that stretch reads DYYATLGVAK…QKRREYDTYG (66 aa). Lys121 carries the N6-acetyllysine modification. The CR-type zinc-finger motif lies at 230–308; it reads GVNKDVNVNV…CEGKGQTVQR (79 aa). Residues Cys243, Cys246, Cys260, Cys263, Cys282, Cys285, Cys296, and Cys299 each coordinate Zn(2+). One copy of the CXXCXGXG motif; approximate repeat lies at 243-250; that stretch reads CPKCAGSK. The stretch at 260–267 is one CXXCXGXG motif repeat; it reads CQYCNGTG. The CXXCXGXG motif; approximate repeat unit spans residues 282-289; that stretch reads CRYCQGTR. A CXXCXGXG motif repeat occupies 296–303; that stretch reads CAECEGKG. Residues 441-529 form a disordered region; sequence TPGQIHGMAQ…FLNKIKSMFN (89 aa). The segment covering 497–508 has biased composition (basic and acidic residues); the sequence is QSEKSETRRKDQ.

It is found in the mitochondrion outer membrane. Functionally, may act as a tumor suppressor in larval imaginal disks. This chain is DnaJ homolog l(2)tid, mitochondrial (l(2)tid), found in Drosophila virilis (Fruit fly).